The primary structure comprises 165 residues: Large ribosomal subunit protein uL11 (165 aa).

Serine 38 bears the Phosphoserine mark. A Glycyl lysine isopeptide (Lys-Gly) (interchain with G-Cter in SUMO2) cross-link involves residue lysine 40. Lysine 48 participates in a covalent cross-link: Glycyl lysine isopeptide (Lys-Gly) (interchain with G-Cter in ubiquitin). Residue lysine 54 is modified to N6-acetyllysine. Residue lysine 83 forms a Glycyl lysine isopeptide (Lys-Gly) (interchain with G-Cter in ubiquitin) linkage. Serine 165 bears the Phosphoserine mark.

Belongs to the universal ribosomal protein uL11 family. As to quaternary structure, component of the large ribosomal subunit. Mature ribosomes consist of a small (40S) and a large (60S) subunit. The 40S subunit contains about 33 different proteins and 1 molecule of RNA (18S). The 60S subunit contains about 49 different proteins and 3 molecules of RNA (28S, 5.8S and 5S). In terms of processing, ubiquitinated at Lys-48 and Lys-83 by RNF14 and RNF25 in response to ribosome collisions (ribosome stalling).

It is found in the cytoplasm. Component of the large ribosomal subunit. The ribosome is a large ribonucleoprotein complex responsible for the synthesis of proteins in the cell. Binds directly to 26S ribosomal RNA. In Rattus norvegicus (Rat), this protein is Large ribosomal subunit protein uL11 (Rpl12).